Consider the following 352-residue polypeptide: Adenosine deaminase (352 aa).

The residue at position 2 (alanine 2) is an N-acetylalanine. Positions 15 and 17 each coordinate Zn(2+). Substrate-binding residues include histidine 17 and aspartate 19. An N6-acetyllysine modification is found at lysine 54. Residue glycine 184 participates in substrate binding. Position 214 (histidine 214) interacts with Zn(2+). Glutamate 217 serves as the catalytic Proton donor. N6-acetyllysine is present on lysine 232. Aspartate 295 lines the Zn(2+) pocket. Aspartate 296 provides a ligand contact to substrate.

This sequence belongs to the metallo-dependent hydrolases superfamily. Adenosine and AMP deaminases family. As to quaternary structure, interacts with DPP4 (via extracellular domain). Interacts with PLG (via Kringle 4 domain); the interaction stimulates PLG activation when in complex with DPP4. Zn(2+) is required as a cofactor. Detected in brain and liver (at protein level).

It localises to the cell membrane. Its subcellular location is the cell junction. The protein localises to the cytoplasmic vesicle lumen. It is found in the cytoplasm. The protein resides in the lysosome. It carries out the reaction adenosine + H2O + H(+) = inosine + NH4(+). It catalyses the reaction 2'-deoxyadenosine + H2O + H(+) = 2'-deoxyinosine + NH4(+). The catalysed reaction is cordycepin + H2O + H(+) = 3'-deoxyinosine + NH4(+). Catalyzes the hydrolytic deamination of adenosine and 2-deoxyadenosine. Plays an important role in purine metabolism and in adenosine homeostasis. Modulates signaling by extracellular adenosine, and so contributes indirectly to cellular signaling events. Acts as a positive regulator of T-cell coactivation, by binding DPP4. Its interaction with DPP4 regulates lymphocyte-epithelial cell adhesion. Enhances dendritic cell immunogenicity by affecting dendritic cell costimulatory molecule expression and cytokines and chemokines secretion. Enhances CD4+ T-cell differentiation and proliferation. Acts as a positive modulator of adenosine receptors ADORA1 and ADORA2A, by enhancing their ligand affinity via conformational change. Stimulates plasminogen activation. Plays a role in male fertility. Plays a protective role in early postimplantation embryonic development. Also responsible for the deamination of cordycepin (3'-deoxyadenosine), a fungal natural product that shows antitumor, antibacterial, antifungal, antivirus, and immune regulation properties. The chain is Adenosine deaminase (Ada) from Rattus norvegicus (Rat).